The chain runs to 200 residues: Small ribosomal subunit protein uS4 (200 aa).

Residues 1 to 43 (MARYTGPRGRRDRRAGVMLSSMRKNPLEKKPYPPGEHGRDRQR) form a disordered region. The segment covering 25-43 (NPLEKKPYPPGEHGRDRQR) has biased composition (basic and acidic residues). In terms of domain architecture, S4 RNA-binding spans 92-158 (LRMDNVVYRM…QPIQEAVEQV (67 aa)).

The protein belongs to the universal ribosomal protein uS4 family. As to quaternary structure, part of the 30S ribosomal subunit. Contacts protein S5. The interaction surface between S4 and S5 is involved in control of translational fidelity.

One of the primary rRNA binding proteins, it binds directly to 16S rRNA where it nucleates assembly of the body of the 30S subunit. Its function is as follows. With S5 and S12 plays an important role in translational accuracy. This is Small ribosomal subunit protein uS4 from Rubrobacter xylanophilus (strain DSM 9941 / JCM 11954 / NBRC 16129 / PRD-1).